The sequence spans 361 residues: D-alanine--D-alanine ligase (361 aa).

Residues 134 to 344 enclose the ATP-grasp domain; that stretch reads KILAQRAGVP…YTDLITKLID (211 aa). 169 to 224 provides a ligand contact to ATP; the sequence is ASQLGSDLFVKPSNQGSSVGVSHVTNEKEYKVALAEAFKYDDKVLVEETVHGTEVE. Mg(2+) contacts are provided by D297, E311, and N313.

Belongs to the D-alanine--D-alanine ligase family. Requires Mg(2+) as cofactor. Mn(2+) is required as a cofactor.

Its subcellular location is the cytoplasm. The enzyme catalyses 2 D-alanine + ATP = D-alanyl-D-alanine + ADP + phosphate + H(+). Its pathway is cell wall biogenesis; peptidoglycan biosynthesis. Its function is as follows. Cell wall formation. This is D-alanine--D-alanine ligase from Lactobacillus johnsonii (strain CNCM I-12250 / La1 / NCC 533).